The sequence spans 325 residues: Sel1-repeat-containing protein YbeQ (325 aa).

8 Sel1-like repeats span residues 26–61 (EAQYIVGFYYNRDSAIDSPDDEKAFYWLKLAAEQGH), 63–97 (EAQYSLGQKYTEDKSRHKDNEQAIFWLKKAALQGH), 103–130 (ALGWTLDRGEAPNYKEAVVWYQIAAESG), 132–167 (SYAQNNLGWMYRNGNGVAKDYALAFFWYKQAALQGH), 168–203 (SDAQNNLADLYEDGKGVAQNKTLAAFWYLKSAQQGN), 205–239 (HAQFQIAWDYNAGEGVDQDYKQAMYWYLKAAAQGS), 242–275 (AYVNIGYMYKHGQGVEKDYQAAFEWFTKAAECND), and 280–305 (YNLAIMYHYGEGRPVDLRQALDLYRK).

It to E.coli YbeT.

The sequence is that of Sel1-repeat-containing protein YbeQ (ybeQ) from Escherichia coli (strain K12).